The primary structure comprises 476 residues: MAEYEVVIGLEVHAQLRTSSKLFCACSTEFGSEPNTNVCEICSGMPGVLPVVNRKAVEYAVMMGMAVDCTINNDSVFARKNYFYPDLPYGYQISQFERPLCEHGHLDIPVNGGTKRIGITRIHMENDAGKNIHSAADNASYVDLNRAGTPLIEIVSEPDMRSAEEAVAYLKELRSILLYLGICDGNMEEGSFRCDANVSLRPAGQKEFGTRTELKNVNSFRNVQRAIEVEIARQQDLLEDGEKVVQETRLYDAARNVTASMRGKEEAHDYRYFPDPDLIPLHLEDGWLQEWRKALPELPALRRTRFMEQYGLSVQDAELLTAERELADFYEAAVRHGGVPKKVANLMMGEFMRELNERRISVNEAAMTPEAVAELVRLQEEGVVSSKIVHDIFSDLFTSGSMPEAYVKAKGLVQISDSGAIETAVDEVLAENPAEVEAYRGGKTKLMSFFMGQVMRKTRGKANPAVVTGLLTEKLG.

The protein belongs to the GatB/GatE family. GatB subfamily. Heterotrimer of A, B and C subunits.

It catalyses the reaction L-glutamyl-tRNA(Gln) + L-glutamine + ATP + H2O = L-glutaminyl-tRNA(Gln) + L-glutamate + ADP + phosphate + H(+). It carries out the reaction L-aspartyl-tRNA(Asn) + L-glutamine + ATP + H2O = L-asparaginyl-tRNA(Asn) + L-glutamate + ADP + phosphate + 2 H(+). Allows the formation of correctly charged Asn-tRNA(Asn) or Gln-tRNA(Gln) through the transamidation of misacylated Asp-tRNA(Asn) or Glu-tRNA(Gln) in organisms which lack either or both of asparaginyl-tRNA or glutaminyl-tRNA synthetases. The reaction takes place in the presence of glutamine and ATP through an activated phospho-Asp-tRNA(Asn) or phospho-Glu-tRNA(Gln). In Oleidesulfovibrio alaskensis (strain ATCC BAA-1058 / DSM 17464 / G20) (Desulfovibrio alaskensis), this protein is Aspartyl/glutamyl-tRNA(Asn/Gln) amidotransferase subunit B.